We begin with the raw amino-acid sequence, 2774 residues long: Teneurin-2 (2774 aa).

The Teneurin N-terminal domain maps to 1–375 (MDVKDRRHRS…KPSKYCSWKC (375 aa)). Over 1–379 (MDVKDRRHRS…YCSWKCAALS (379 aa)) the chain is Cytoplasmic. Phosphoserine occurs at positions 90 and 124. The disordered stretch occupies residues 111-271 (TGSDADSDTE…HHHSSANSLN (161 aa)). A compositionally biased stretch (polar residues) spans 141–155 (SSGLSSRENSALTLT). Threonine 155 carries the phosphothreonine modification. At serine 157 the chain carries Phosphoserine. Residues 159-168 (NENKSDDDNG) show a composition bias toward basic and acidic residues. Residues 174 to 188 (TSSSSLLPSAQLPSS) show a composition bias toward low complexity. A compositionally biased stretch (polar residues) spans 202 to 211 (DSNTSHQIMD). A compositionally biased stretch (low complexity) spans 229-240 (SGPQQASSSGPP). Residues 380 to 400 (AIAAALLLAILLAYFIAMHLL) traverse the membrane as a helical segment. Residues 401–2774 (GLNWQLQPAD…FLRQNEMGKR (2374 aa)) lie on the Extracellular side of the membrane. Asparagine 443 and asparagine 482 each carry an N-linked (GlcNAc...) asparagine glycan. 8 EGF-like domains span residues 575 to 603 (DCPRNCHGNGECVSGLCHCFPGFLGADCA), 605 to 634 (AACPVLCSGNGQYSKGTCQCYSGWKGAECD), 636 to 668 (PMNQCIDPSCGGHGSCIDGNCVCAAGYKGEHCE), 669 to 701 (EVDCLDPTCSSHGVCVNGECLCSPGWGGLNCEL), 702 to 735 (ARVQCPDQCSGHGTYLPDSGLCNCDPNWMGPDCS), 738 to 766 (VCSVDCGTHGVCIGGACRCEEGWTGAACD), 769 to 797 (VCHPRCIEHGTCKDGKCECREGWNGEHCT), and 808 to 841 (DGCPDLCNGNGRCTLGQNSWQCVCQTGWRGPGCN). 22 cysteine pairs are disulfide-bonded: cysteine 576-cysteine 586, cysteine 580-cysteine 591, cysteine 593-cysteine 602, cysteine 611-cysteine 622, cysteine 624-cysteine 633, cysteine 640-cysteine 651, cysteine 645-cysteine 656, cysteine 658-cysteine 667, cysteine 672-cysteine 683, cysteine 677-cysteine 688, cysteine 690-cysteine 699, cysteine 710-cysteine 723, cysteine 725-cysteine 734, cysteine 739-cysteine 749, cysteine 743-cysteine 754, cysteine 756-cysteine 765, cysteine 770-cysteine 780, cysteine 774-cysteine 785, cysteine 787-cysteine 796, cysteine 810-cysteine 820, cysteine 814-cysteine 829, and cysteine 831-cysteine 840. N-linked (GlcNAc...) asparagine glycans are attached at residues asparagine 925, asparagine 948, and asparagine 1267. NHL repeat units lie at residues 1272 to 1316 (LELR…VKSL), 1342 to 1386 (ARCG…NGII), 1401 to 1452 (LSCD…IAGR), 1474 to 1501 (LESASAIAISHTGVLYITETDEKKINRL), and 1530 to 1573 (CYSG…VSKN). The stretch at 1583–1602 (YEAASPGEQELYVFNADGIH) is one YD 1 repeat. Asparagine 1616 carries an N-linked (GlcNAc...) asparagine glycan. 3 YD repeats span residues 1619–1639 (YSADNDVTELIDNNGNSLKIR), 1682–1701 (YDGNTGLLATKSDETGWTTF), and 1702–1724 (YDYDHEGRLTNVTRPTGVVTSLH). Residues asparagine 1712, asparagine 1749, asparagine 1773, asparagine 1807, and asparagine 1892 are each glycosylated (N-linked (GlcNAc...) asparagine). YD repeat units lie at residues 1895–1914 (YFFNGRLAGLQRGAMSERTD), 1936–1954 (YLDKSMVLLLQSQRQYIFE), 1955–1975 (YDSSDRLHAVTMPSVARHSMS), 1982–1999 (YIRNIYNPPESNASVIFD), 2000–2021 (YSDDGRILKTSFLGTGRQVFYK), 2022–2039 (YGKLSKLSEIVYDSTAVT), 2042–2062 (YDETTGVLKMVNLQSGGFSCT), 2065–2085 (YRKVGPLVDKQIYRFSEEGMI), 2093–2113 (YHDNSFRIASIKPVISETPLP), 2119–2136 (YDEISGKVEHFGKFGVIY), 2137–2163 (YDINQIITTAVMTLSKHFDTHGRIKEV), 2165–2178 (YEMFRSLMYWMTVQ), 2179–2202 (YDSMGRVIKRELKLGPYANTTKYT), 2205–2225 (YDGDGQLQSVAVNDRPTWRYS), 2226–2246 (YDLNGNLHLLNPGNSARLMPL), 2248–2268 (YDLRDRITRLGDVQYKIDDDG), 2280–2300 (YNSKGLLTRAYNKASGWSVQY), and 2302–2322 (YDGVSRRASYKTNLGHHLQYF). Residue asparagine 1993 is glycosylated (N-linked (GlcNAc...) asparagine). The N-linked (GlcNAc...) asparagine glycan is linked to asparagine 2197. Asparagine 2337 carries N-linked (GlcNAc...) asparagine glycosylation. Residues 2348 to 2389 (YDLQGHLFAMESSSGEEYYVASDNTGTPLAVFSINGLMIKQL) form a YD 23 repeat. Asparagine 2648 carries an N-linked (GlcNAc...) asparagine glycan.

This sequence belongs to the tenascin family. Teneurin subfamily. In terms of assembly, homodimer; disulfide-linked. Heterodimer with either TENM1 or TENM3. May also form heterodimer with TENM4. Interacts with ADGRL1 isoform 2. Derives from the membrane form by proteolytic processing. In terms of processing, derives from the plasma membrane form by proteolytic cleavage and translocates to the nucleus. Homophilic binding of the C-terminal extracellular domain stimulates its proteolytic cleavage and release in the cytoplasmic. Is subjected to rapid degradation by the proteasome pathway. Expressed in the brain (at protein level).

The protein localises to the cell membrane. It is found in the presynaptic cell membrane. Its subcellular location is the postsynaptic cell membrane. It localises to the endoplasmic reticulum. The protein resides in the golgi apparatus. The protein localises to the synapse. It is found in the cell projection. Its subcellular location is the dendritic spine. It localises to the filopodium. The protein resides in the growth cone. The protein localises to the nucleus. It is found in the PML body. In terms of biological role, involved in neural development, regulating the establishment of proper connectivity within the nervous system. Acts as a ligand of the ADGRL1 and ADGRL3 receptors that are expressed at the surface of adjacent cells. Promotes the formation of filopodia and enlarged growth cone in neuronal cells. Mediates axon guidance and homophilic and heterophilic cell-cell adhesion. May function as a cellular signal transducer. Induces gene transcription inhibition. The sequence is that of Teneurin-2 (Tenm2) from Rattus norvegicus (Rat).